The primary structure comprises 141 residues: Large ribosomal subunit protein uL16 (141 aa).

It belongs to the universal ribosomal protein uL16 family. In terms of assembly, part of the 50S ribosomal subunit. Contacts the CTC protein (RL25).

In terms of biological role, binds the 5S and 23S rRNAs and is also seen to make contacts with the A and P site tRNAs. Interacts with A site tRNA mimics, and is probably one of the key factors, along with a helix of the 23S rRNA, in positioning tRNA stems in the peptidyl-transferase center. The protein is Large ribosomal subunit protein uL16 (rplP) of Deinococcus radiodurans (strain ATCC 13939 / DSM 20539 / JCM 16871 / CCUG 27074 / LMG 4051 / NBRC 15346 / NCIMB 9279 / VKM B-1422 / R1).